We begin with the raw amino-acid sequence, 156 residues long: D-aminoacyl-tRNA deacylase (156 aa).

The Gly-cisPro motif, important for rejection of L-amino acids motif lies at 142–143 (GP).

This sequence belongs to the DTD family. In terms of assembly, homodimer.

Its subcellular location is the cytoplasm. It catalyses the reaction glycyl-tRNA(Ala) + H2O = tRNA(Ala) + glycine + H(+). It carries out the reaction a D-aminoacyl-tRNA + H2O = a tRNA + a D-alpha-amino acid + H(+). An aminoacyl-tRNA editing enzyme that deacylates mischarged D-aminoacyl-tRNAs. Also deacylates mischarged glycyl-tRNA(Ala), protecting cells against glycine mischarging by AlaRS. Acts via tRNA-based rather than protein-based catalysis; rejects L-amino acids rather than detecting D-amino acids in the active site. By recycling D-aminoacyl-tRNA to D-amino acids and free tRNA molecules, this enzyme counteracts the toxicity associated with the formation of D-aminoacyl-tRNA entities in vivo and helps enforce protein L-homochirality. In Delftia acidovorans (strain DSM 14801 / SPH-1), this protein is D-aminoacyl-tRNA deacylase.